A 212-amino-acid polypeptide reads, in one-letter code: AVPQSIDWRDYGAVTSVKNQNPCGACWAFAAIATVESIYKIKKGILEPLSEQQVLDCAKGYGCKGGWEFRAFEFIISNKGVASGAIYPYKAAKGTCKTDGVPNSAYITGYARVPRNNESSMMYAVSKQPITVAVDANANFQYYKSGVFNGPCGTSLNHAVTAIGYGQDSIIYPKKWGAKWGEAGYIRMARDVSSSSGICGIAIDPLYPTLEE.

2 cysteine pairs are disulfide-bonded: cysteine 23-cysteine 63 and cysteine 57-cysteine 96. Residue cysteine 26 is part of the active site. Asparagine 117 carries N-linked (GlcNAc...) asparagine glycosylation. A disulfide bridge links cysteine 152 with cysteine 199. Residue histidine 158 is part of the active site.

Belongs to the peptidase C1 family.

The enzyme catalyses Broad specificity for cleavage of proteins, but strong preference for Z-Arg-Arg-|-NHMec among small molecule substrates.. In terms of biological role, cysteine proteinase with a high level of diversity in substrate specificity. This Ananas comosus (Pineapple) protein is Stem bromelain.